The sequence spans 118 residues: NADH-quinone oxidoreductase subunit A (118 aa).

Helical transmembrane passes span 6 to 26 (LIIG…LLTA), 61 to 81 (FMYG…LPWA), and 87 to 107 (LGLF…IGLW).

Belongs to the complex I subunit 3 family. NDH-1 is composed of 14 different subunits. Subunits NuoA, H, J, K, L, M, N constitute the membrane sector of the complex.

It is found in the cell membrane. It carries out the reaction a quinone + NADH + 5 H(+)(in) = a quinol + NAD(+) + 4 H(+)(out). Its function is as follows. NDH-1 shuttles electrons from NADH, via FMN and iron-sulfur (Fe-S) centers, to quinones in the respiratory chain. The immediate electron acceptor for the enzyme in this species is believed to be a menaquinone. Couples the redox reaction to proton translocation (for every two electrons transferred, four hydrogen ions are translocated across the cytoplasmic membrane), and thus conserves the redox energy in a proton gradient. The chain is NADH-quinone oxidoreductase subunit A from Clostridium beijerinckii (strain ATCC 51743 / NCIMB 8052) (Clostridium acetobutylicum).